The chain runs to 278 residues: Large ribosomal subunit protein uL2 (278 aa).

Disordered stretches follow at residues 1–58 (MAIR…GGGH) and 224–278 (VVMN…GKKR). Basic and acidic residues predominate over residues 23 to 33 (EITRDHPEKSL). The segment covering 37 to 58 (LHGRGGRNAHGRITTRHKGGGH) has biased composition (basic residues). A compositionally biased stretch (basic and acidic residues) spans 253 to 268 (PEGRTRKPKKASDKLI). Residues 269–278 (VRRRRTGKKR) are compositionally biased toward basic residues.

Belongs to the universal ribosomal protein uL2 family. In terms of assembly, part of the 50S ribosomal subunit. Forms a bridge to the 30S subunit in the 70S ribosome.

Functionally, one of the primary rRNA binding proteins. Required for association of the 30S and 50S subunits to form the 70S ribosome, for tRNA binding and peptide bond formation. It has been suggested to have peptidyltransferase activity; this is somewhat controversial. Makes several contacts with the 16S rRNA in the 70S ribosome. The chain is Large ribosomal subunit protein uL2 from Mycolicibacterium vanbaalenii (strain DSM 7251 / JCM 13017 / BCRC 16820 / KCTC 9966 / NRRL B-24157 / PYR-1) (Mycobacterium vanbaalenii).